The following is a 294-amino-acid chain: 4-hydroxy-tetrahydrodipicolinate synthase (294 aa).

Threonine 47 is a binding site for pyruvate. The active-site Proton donor/acceptor is tyrosine 135. Lysine 163 functions as the Schiff-base intermediate with substrate in the catalytic mechanism. Valine 205 is a pyruvate binding site.

Belongs to the DapA family. As to quaternary structure, homotetramer; dimer of dimers.

It localises to the cytoplasm. The catalysed reaction is L-aspartate 4-semialdehyde + pyruvate = (2S,4S)-4-hydroxy-2,3,4,5-tetrahydrodipicolinate + H2O + H(+). Its pathway is amino-acid biosynthesis; L-lysine biosynthesis via DAP pathway; (S)-tetrahydrodipicolinate from L-aspartate: step 3/4. In terms of biological role, catalyzes the condensation of (S)-aspartate-beta-semialdehyde [(S)-ASA] and pyruvate to 4-hydroxy-tetrahydrodipicolinate (HTPA). The polypeptide is 4-hydroxy-tetrahydrodipicolinate synthase (Rickettsia bellii (strain RML369-C)).